Consider the following 549-residue polypeptide: Glucose-6-phosphate isomerase (549 aa).

K80, K228, and K234 each carry N6-acetyllysine. E355 acts as the Proton donor in catalysis. Catalysis depends on residues H386 and K514.

The protein belongs to the GPI family.

The protein resides in the cytoplasm. The catalysed reaction is alpha-D-glucose 6-phosphate = beta-D-fructose 6-phosphate. It functions in the pathway carbohydrate biosynthesis; gluconeogenesis. The protein operates within carbohydrate degradation; glycolysis; D-glyceraldehyde 3-phosphate and glycerone phosphate from D-glucose: step 2/4. Its function is as follows. Catalyzes the reversible isomerization of glucose-6-phosphate to fructose-6-phosphate. The protein is Glucose-6-phosphate isomerase of Shigella flexneri.